A 393-amino-acid chain; its full sequence is S-adenosylmethionine synthase 4 (393 aa).

E9 contributes to the Mg(2+) binding site. An ATP-binding site is contributed by H15. E43 provides a ligand contact to K(+). L-methionine contacts are provided by E56 and Q99. ATP contacts are provided by residues D167–K169, S235–F238, D246, R252–K253, A269, K273, and K277. D246 is a binding site for L-methionine. K277 contributes to the L-methionine binding site.

It belongs to the AdoMet synthase family. As to quaternary structure, homotetramer. Mn(2+) is required as a cofactor. Mg(2+) serves as cofactor. It depends on Co(2+) as a cofactor. Requires K(+) as cofactor.

Its subcellular location is the cytoplasm. It catalyses the reaction L-methionine + ATP + H2O = S-adenosyl-L-methionine + phosphate + diphosphate. It participates in amino-acid biosynthesis; S-adenosyl-L-methionine biosynthesis; S-adenosyl-L-methionine from L-methionine: step 1/1. Its function is as follows. Catalyzes the formation of S-adenosylmethionine from methionine and ATP. The reaction comprises two steps that are both catalyzed by the same enzyme: formation of S-adenosylmethionine (AdoMet) and triphosphate, and subsequent hydrolysis of the triphosphate. The sequence is that of S-adenosylmethionine synthase 4 (METK4) from Vitis vinifera (Grape).